The chain runs to 500 residues: Chromosomal replication initiator protein DnaA (500 aa).

A disordered region spans residues 1-37; that stretch reads MSDTPFGDADHPRPAPIHPDAVLPPPMSSQSADNDPT. Positions 1-103 are domain I, interacts with DnaA modulators; the sequence is MSDTPFGDAD…EELLSDHFHK (103 aa). A compositionally biased stretch (pro residues) spans 14–27; the sequence is PAPIHPDAVLPPPM. Positions 103 to 161 are domain II; that stretch reads KAIHLAITIDPDLELALGAPDHEDEEEEVPPAQFVPKVTVGVTEPSARPTTTIDDDEGN. A domain III, AAA+ region region spans residues 162–378; the sequence is RLNPKYTFDS…GALIRVTAFA (217 aa). The ATP site is built by glycine 206, glycine 208, lysine 209, and threonine 210. Residues 379–500 form a domain IV, binds dsDNA region; the sequence is SLNQQPVDIS…SEITNRIKQY (122 aa).

Belongs to the DnaA family. As to quaternary structure, oligomerizes as a right-handed, spiral filament on DNA at oriC.

It is found in the cytoplasm. Functionally, plays an essential role in the initiation and regulation of chromosomal replication. ATP-DnaA binds to the origin of replication (oriC) to initiate formation of the DNA replication initiation complex once per cell cycle. Binds the DnaA box (a 9 base pair repeat at the origin) and separates the double-stranded (ds)DNA. Forms a right-handed helical filament on oriC DNA; dsDNA binds to the exterior of the filament while single-stranded (ss)DNA is stabiized in the filament's interior. The ATP-DnaA-oriC complex binds and stabilizes one strand of the AT-rich DNA unwinding element (DUE), permitting loading of DNA polymerase. After initiation quickly degrades to an ADP-DnaA complex that is not apt for DNA replication. Binds acidic phospholipids. This Cutibacterium acnes (strain DSM 16379 / KPA171202) (Propionibacterium acnes) protein is Chromosomal replication initiator protein DnaA.